A 451-amino-acid chain; its full sequence is Homeobox protein meis3-B (451 aa).

Positions 33–64 (HHSLSQSTPYGSTGAAHRVPMPPGMGSNDGLK) are disordered. The segment covering 34–43 (HSLSQSTPYG) has biased composition (polar residues). In terms of domain architecture, MEIS N-terminal spans 102–185 (GGDVCSSDSF…PIDLVIDDRD (84 aa)). The disordered stretch occupies residues 206–272 (NNTWIRDHDE…RDKKRNKKRG (67 aa)). Residues 218 to 230 (STHSGTPGPSSGG) are compositionally biased toward low complexity. Residues 231–242 (LASQSGDNSSEQ) show a composition bias toward polar residues. Residues 267 to 329 (RNKKRGIFPK…NARRRIVQPM (63 aa)) constitute a DNA-binding region (homeobox).

Belongs to the TALE/MEIS homeobox family.

It is found in the nucleus. Functionally, a caudalizing protein which is required to pattern the anterior/posterior (A/P) axis during central nervous system (CNS) formation. Inhibits anterior neural expression and acts as a transcriptional activator to induce posterior neural gene expression. Maintains a proper A/P balance required for hindbrain formation by activating the FGF/MAPK pathway, which modulates the planar cell polarity (PCP) pathway. Interacts with retinoid signaling during hindbrain patterning. In Xenopus laevis (African clawed frog), this protein is Homeobox protein meis3-B (meis3-b).